We begin with the raw amino-acid sequence, 202 residues long: MKLVGSYTSPFVRKLSILLLEKGITFEFINELPYNADNGVAQFNPLGKVPVLVTEEGECWFDSPIIAEYIELMNVAPAMLPRDPLESLRVRKIEALADGIMDAGLVSVREQARPAAQQSEDELLRQREKINRSLDVLEGYLVDGTLKTDTVNLATIAIACAVGYLNFRRVAPGWCVDRPHLVKLVENLFSRESFARTEPPKA.

Residues 1–78 (MKLVGSYTSP…YIELMNVAPA (78 aa)) form the GST N-terminal domain. Glutathione-binding positions include Ser-9, Val-49, and 62 to 63 (DS). A GST C-terminal domain is found at 83–202 (DPLESLRVRK…SFARTEPPKA (120 aa)).

This sequence belongs to the GST superfamily. HSP26 family.

Functionally, glutathione (GSH) transferase homolog, that might be involved in selenium metabolism. This is an uncharacterized protein from Escherichia coli (strain K12).